Here is a 238-residue protein sequence, read N- to C-terminus: Opacity protein opA66 (238 aa).

A signal peptide is located at residue alanine 1. Disordered stretches follow at residues 88-109 (NLQRRTSNGNRRDRKTENQENG) and 162-183 (GARGTDPTVSSPYKNTQDAHQE). Polar residues predominate over residues 168-183 (PTVSSPYKNTQDAHQE).

The protein belongs to the opacity porin family.

It is found in the cell outer membrane. Its function is as follows. Implicated in a number of adherence functions. OPA proteins are implicated in pathogenesis and are subject to phase variation. This Neisseria gonorrhoeae protein is Opacity protein opA66.